We begin with the raw amino-acid sequence, 853 residues long: DNA mismatch repair protein MutS (853 aa).

614–621 is a binding site for ATP; that stretch reads GPNMGGKS.

The protein belongs to the DNA mismatch repair MutS family.

Its function is as follows. This protein is involved in the repair of mismatches in DNA. It is possible that it carries out the mismatch recognition step. This protein has a weak ATPase activity. The sequence is that of DNA mismatch repair protein MutS from Shigella boydii serotype 18 (strain CDC 3083-94 / BS512).